The chain runs to 260 residues: Ribonuclease HII (260 aa).

One can recognise an RNase H type-2 domain in the interval 71-259 (RRIAGIDEAG…VREVLKASEQ (189 aa)). 3 residues coordinate a divalent metal cation: D77, E78, and D169.

This sequence belongs to the RNase HII family. Mn(2+) serves as cofactor. The cofactor is Mg(2+).

It is found in the cytoplasm. It carries out the reaction Endonucleolytic cleavage to 5'-phosphomonoester.. Endonuclease that specifically degrades the RNA of RNA-DNA hybrids. This is Ribonuclease HII from Geobacillus kaustophilus (strain HTA426).